A 1296-amino-acid polypeptide reads, in one-letter code: Probable serine/threonine protein kinase IREH1 (1296 aa).

3 disordered regions span residues 1-274 (MVFK…SESP), 457-480 (SGAG…QEQH), and 524-553 (SPAL…VGSR). Residues 10–32 (SSKKSGSSSPDSSNSPRSVGSNS) are compositionally biased toward low complexity. Ser32 is modified (phosphoserine). 3 stretches are compositionally biased toward basic and acidic residues: residues 68–77 (DGLKKKDGSS), 101–112 (EVKKPPPPEVKE), and 178–208 (RKKE…RDSL). Residues 214–249 (PPRSLSPTLPPSGSRLQNVASSSGTGRSEMSSGRSG) show a composition bias toward low complexity. The C2H2-type; atypical zinc finger occupies 602 to 621 (CRICEEEVPTTHVEDHSRVC). Residues 724-750 (FGPKSDQGMTTSSASSMTPRSPIPTPR) are disordered. Residues 730 to 740 (QGMTTSSASSM) are compositionally biased toward polar residues. The region spanning 882–1171 (FEIIKPISRG…AAEVKQHIFF (290 aa)) is the Protein kinase domain. Residues 888-896 (ISRGAFGRV) and Lys911 each bind ATP. Catalysis depends on Asp1005, which acts as the Proton acceptor. At Ser1070 the chain carries Phosphoserine. In terms of domain architecture, AGC-kinase C-terminal spans 1172 to 1277 (KDINWDTLAR…KNLSQLASIN (106 aa)). A disordered region spans residues 1214-1245 (PSGEVPDYSDADSMTNSSGCSSNHHEEGEAEE). The segment covering 1225 to 1235 (DSMTNSSGCSS) has biased composition (polar residues). The segment covering 1236–1245 (NHHEEGEAEE) has biased composition (basic and acidic residues).

Belongs to the protein kinase superfamily. AGC Ser/Thr protein kinase family.

It catalyses the reaction L-seryl-[protein] + ATP = O-phospho-L-seryl-[protein] + ADP + H(+). The catalysed reaction is L-threonyl-[protein] + ATP = O-phospho-L-threonyl-[protein] + ADP + H(+). Its function is as follows. May be involved in root hair elongation. The polypeptide is Probable serine/threonine protein kinase IREH1 (Arabidopsis thaliana (Mouse-ear cress)).